The primary structure comprises 726 residues: Catalase-peroxidase (726 aa).

An N-terminal signal peptide occupies residues 1–16 (MDNPTDSAGKCPVAHG). The segment at 1–26 (MDNPTDSAGKCPVAHGNTPRSRSNRD) is disordered. The tryptophyl-tyrosyl-methioninium (Trp-Tyr) (with M-244) cross-link spans 96–218 (WHSAGTYRIT…LGAVQMGLIY (123 aa)). Histidine 97 serves as the catalytic Proton acceptor. A cross-link (tryptophyl-tyrosyl-methioninium (Tyr-Met) (with W-96)) is located at residues 218 to 244 (YVNPEGPNGTPDPLASARDIRETFARM). Histidine 259 lines the heme b pocket.

It belongs to the peroxidase family. Peroxidase/catalase subfamily. As to quaternary structure, homodimer or homotetramer. Requires heme b as cofactor. Post-translationally, formation of the three residue Trp-Tyr-Met cross-link is important for the catalase, but not the peroxidase activity of the enzyme.

The catalysed reaction is H2O2 + AH2 = A + 2 H2O. It catalyses the reaction 2 H2O2 = O2 + 2 H2O. In terms of biological role, bifunctional enzyme with both catalase and broad-spectrum peroxidase activity. The sequence is that of Catalase-peroxidase from Rhizobium johnstonii (strain DSM 114642 / LMG 32736 / 3841) (Rhizobium leguminosarum bv. viciae).